We begin with the raw amino-acid sequence, 728 residues long: Polyribonucleotide nucleotidyltransferase (728 aa).

Mg(2+) is bound by residues Asp513 and Asp519. In terms of domain architecture, KH spans 580 to 640 (PKVKMILIKP…EIVDLTVTYI (61 aa)). The 75-residue stretch at 650 to 724 (ENVYEVKILR…ERGQIDLSKK (75 aa)) folds into the S1 motif domain.

It belongs to the polyribonucleotide nucleotidyltransferase family. It depends on Mg(2+) as a cofactor.

Its subcellular location is the cytoplasm. It carries out the reaction RNA(n+1) + phosphate = RNA(n) + a ribonucleoside 5'-diphosphate. Involved in mRNA degradation. Catalyzes the phosphorolysis of single-stranded polyribonucleotides processively in the 3'- to 5'-direction. This chain is Polyribonucleotide nucleotidyltransferase, found in Phytoplasma mali (strain AT).